We begin with the raw amino-acid sequence, 156 residues long: Small ribosomal subunit protein uS7 (156 aa).

This sequence belongs to the universal ribosomal protein uS7 family. As to quaternary structure, part of the 30S ribosomal subunit. Contacts proteins S9 and S11.

Functionally, one of the primary rRNA binding proteins, it binds directly to 16S rRNA where it nucleates assembly of the head domain of the 30S subunit. Is located at the subunit interface close to the decoding center, probably blocks exit of the E-site tRNA. This chain is Small ribosomal subunit protein uS7, found in Clostridium botulinum (strain Okra / Type B1).